We begin with the raw amino-acid sequence, 274 residues long: Transcription factor MYB32 (274 aa).

2 HTH myb-type domains span residues 9–61 (KDHT…INYL) and 62–116 (RPDL…KRKL). 2 consecutive DNA-binding regions (H-T-H motif) follow at residues 37–61 (WRSL…INYL) and 89–112 (WSLI…NTHV). Residues 123–144 (PATHRPINETKTSQDSSDSSKT) form a disordered region.

In terms of tissue distribution, mostly expressed in roots, and, to a lower extent, in stems, flower buds, and siliques.

The protein resides in the nucleus. The polypeptide is Transcription factor MYB32 (MYB32) (Arabidopsis thaliana (Mouse-ear cress)).